The chain runs to 687 residues: Fatty acid oxidation complex subunit alpha (687 aa).

The tract at residues 1–191 (MKNTSAFAWT…KLGVVDASVP (191 aa)) is enoyl-CoA hydratase. Residues 307 to 687 (KSIDYVGVLG…ADKYGDRFIE (381 aa)) are 3-hydroxyacyl-CoA dehydrogenase.

It in the N-terminal section; belongs to the enoyl-CoA hydratase/isomerase family. In the central section; belongs to the 3-hydroxyacyl-CoA dehydrogenase family. Heterotetramer of two alpha chains (FadJ) and two beta chains (FadI).

The protein localises to the cytoplasm. It catalyses the reaction a (3S)-3-hydroxyacyl-CoA = a (2E)-enoyl-CoA + H2O. The enzyme catalyses a 4-saturated-(3S)-3-hydroxyacyl-CoA = a (3E)-enoyl-CoA + H2O. The catalysed reaction is a (3S)-3-hydroxyacyl-CoA + NAD(+) = a 3-oxoacyl-CoA + NADH + H(+). It carries out the reaction (3S)-3-hydroxybutanoyl-CoA = (3R)-3-hydroxybutanoyl-CoA. Its pathway is lipid metabolism; fatty acid beta-oxidation. Catalyzes the formation of a hydroxyacyl-CoA by addition of water on enoyl-CoA. Also exhibits 3-hydroxyacyl-CoA epimerase and 3-hydroxyacyl-CoA dehydrogenase activities. This is Fatty acid oxidation complex subunit alpha from Aliivibrio fischeri (strain ATCC 700601 / ES114) (Vibrio fischeri).